The sequence spans 664 residues: L-glutamate oxidase precursor (664 aa).

Positions M1–A44 form a signal peptide, tat-type signal. The FAD site is built by A105, E124, A125, R133, M161, R162, D638, W646, and I647.

It belongs to the flavin monoamine oxidase family. LGOX subfamily. As to quaternary structure, the mature enzyme is a heterohexamer composed of 2 alpha chains, 2 beta chains and 2 gamma chains (alpha2beta2gamma2). FAD serves as cofactor. Predicted to be exported by the Tat system. The position of the signal peptide cleavage has not been experimentally proven. Post-translationally, the precursor form is proteolytically cleaved by an endopeptidase into alpha, beta and gamma chains, which form the stable mature enzyme.

The protein localises to the secreted. It carries out the reaction L-glutamate + O2 + H2O = H2O2 + 2-oxoglutarate + NH4(+). With respect to regulation, activity is stimulated in the presence of Mn(2+), Ca(2+) or Mg(2+). Its function is as follows. Catalyzes the oxidative deamination of L-glutamate to 2-ketoglutarate along with the production of ammonia and hydrogen peroxide. The chain is L-glutamate oxidase precursor from Streptomyces viridosporus (strain ATCC 14672 / DSM 40746 / JCM 4963 / KCTC 9882 / NRRL B-12104 / FH 1290) (Streptomyces ghanaensis).